Consider the following 368-residue polypeptide: tRNA-specific 2-thiouridylase MnmA (368 aa).

ATP-binding positions include 11–18 (GMSGGVDS) and Met37. The tract at residues 97-99 (NPD) is interaction with target base in tRNA. Cys102 acts as the Nucleophile in catalysis. Cys102 and Cys199 are disulfide-bonded. Gly127 provides a ligand contact to ATP. The tract at residues 149–151 (KDQ) is interaction with tRNA. The Cysteine persulfide intermediate role is filled by Cys199. An interaction with tRNA region spans residues 311–312 (RY).

Belongs to the MnmA/TRMU family. In terms of assembly, interacts with TusE.

The protein resides in the cytoplasm. The catalysed reaction is S-sulfanyl-L-cysteinyl-[protein] + uridine(34) in tRNA + AH2 + ATP = 2-thiouridine(34) in tRNA + L-cysteinyl-[protein] + A + AMP + diphosphate + H(+). In terms of biological role, catalyzes the 2-thiolation of uridine at the wobble position (U34) of tRNA(Lys), tRNA(Glu) and tRNA(Gln), leading to the formation of s(2)U34, the first step of tRNA-mnm(5)s(2)U34 synthesis. Sulfur is provided by IscS, via a sulfur-relay system. Binds ATP and its substrate tRNAs. The polypeptide is tRNA-specific 2-thiouridylase MnmA (Klebsiella pneumoniae subsp. pneumoniae (strain ATCC 700721 / MGH 78578)).